Consider the following 69-residue polypeptide: DNA-directed RNA polymerase subunit omega (69 aa).

The protein belongs to the RNA polymerase subunit omega family. As to quaternary structure, the RNAP catalytic core consists of 2 alpha, 1 beta, 1 beta' and 1 omega subunit. When a sigma factor is associated with the core the holoenzyme is formed, which can initiate transcription.

The catalysed reaction is RNA(n) + a ribonucleoside 5'-triphosphate = RNA(n+1) + diphosphate. Its function is as follows. Promotes RNA polymerase assembly. Latches the N- and C-terminal regions of the beta' subunit thereby facilitating its interaction with the beta and alpha subunits. The chain is DNA-directed RNA polymerase subunit omega from Carboxydothermus hydrogenoformans (strain ATCC BAA-161 / DSM 6008 / Z-2901).